A 102-amino-acid chain; its full sequence is Monothiol glutaredoxin-S5 (102 aa).

The Glutaredoxin domain maps to 1 to 101 (MENLQKMISE…PMLKRAGALW (101 aa)). Cys21 contributes to the [2Fe-2S] cluster binding site. Residues 99–102 (ALWL) carry the Responsive for interaction with TGA factors motif.

Belongs to the glutaredoxin family. CC-type subfamily.

It is found in the cytoplasm. The protein localises to the nucleus. Its function is as follows. May only reduce GSH-thiol disulfides, but not protein disulfides. The sequence is that of Monothiol glutaredoxin-S5 (GRXS5) from Arabidopsis thaliana (Mouse-ear cress).